We begin with the raw amino-acid sequence, 334 residues long: Holliday junction branch migration complex subunit RuvB (334 aa).

A large ATPase domain (RuvB-L) region spans residues 4–184 (ADRLIQPQLQ…FGIPLRLEFY (181 aa)). Residues R24, G65, K68, T69, T70, 131-133 (EDY), R174, Y184, and R221 contribute to the ATP site. T69 is a binding site for Mg(2+). Positions 185–255 (NVKDLSTIVT…VAELALNLLD (71 aa)) are small ATPAse domain (RuvB-S). The tract at residues 258-334 (GEGFDYMDRK…YVHFGMIKPE (77 aa)) is head domain (RuvB-H). 3 residues coordinate DNA: R294, R313, and R318.

Belongs to the RuvB family. In terms of assembly, homohexamer. Forms an RuvA(8)-RuvB(12)-Holliday junction (HJ) complex. HJ DNA is sandwiched between 2 RuvA tetramers; dsDNA enters through RuvA and exits via RuvB. An RuvB hexamer assembles on each DNA strand where it exits the tetramer. Each RuvB hexamer is contacted by two RuvA subunits (via domain III) on 2 adjacent RuvB subunits; this complex drives branch migration. In the full resolvosome a probable DNA-RuvA(4)-RuvB(12)-RuvC(2) complex forms which resolves the HJ.

It localises to the cytoplasm. It carries out the reaction ATP + H2O = ADP + phosphate + H(+). In terms of biological role, the RuvA-RuvB-RuvC complex processes Holliday junction (HJ) DNA during genetic recombination and DNA repair, while the RuvA-RuvB complex plays an important role in the rescue of blocked DNA replication forks via replication fork reversal (RFR). RuvA specifically binds to HJ cruciform DNA, conferring on it an open structure. The RuvB hexamer acts as an ATP-dependent pump, pulling dsDNA into and through the RuvAB complex. RuvB forms 2 homohexamers on either side of HJ DNA bound by 1 or 2 RuvA tetramers; 4 subunits per hexamer contact DNA at a time. Coordinated motions by a converter formed by DNA-disengaged RuvB subunits stimulates ATP hydrolysis and nucleotide exchange. Immobilization of the converter enables RuvB to convert the ATP-contained energy into a lever motion, pulling 2 nucleotides of DNA out of the RuvA tetramer per ATP hydrolyzed, thus driving DNA branch migration. The RuvB motors rotate together with the DNA substrate, which together with the progressing nucleotide cycle form the mechanistic basis for DNA recombination by continuous HJ branch migration. Branch migration allows RuvC to scan DNA until it finds its consensus sequence, where it cleaves and resolves cruciform DNA. This chain is Holliday junction branch migration complex subunit RuvB, found in Shewanella oneidensis (strain ATCC 700550 / JCM 31522 / CIP 106686 / LMG 19005 / NCIMB 14063 / MR-1).